The following is a 252-amino-acid chain: Triosephosphate isomerase (252 aa).

Position 10–12 (10–12) interacts with substrate; the sequence is NWK. Residue His96 is the Electrophile of the active site. The Proton acceptor role is filled by Glu168. Residues Gly174, Ser214, and 235 to 236 each bind substrate; that span reads GG.

Belongs to the triosephosphate isomerase family. In terms of assembly, homodimer.

It is found in the cytoplasm. The catalysed reaction is D-glyceraldehyde 3-phosphate = dihydroxyacetone phosphate. It participates in carbohydrate biosynthesis; gluconeogenesis. Its pathway is carbohydrate degradation; glycolysis; D-glyceraldehyde 3-phosphate from glycerone phosphate: step 1/1. In terms of biological role, involved in the gluconeogenesis. Catalyzes stereospecifically the conversion of dihydroxyacetone phosphate (DHAP) to D-glyceraldehyde-3-phosphate (G3P). The protein is Triosephosphate isomerase of Lactobacillus helveticus (strain DPC 4571).